Consider the following 314-residue polypeptide: 4-hydroxy-3-methylbut-2-enyl diphosphate reductase (314 aa).

Cys-12 is a binding site for [4Fe-4S] cluster. Positions 41 and 74 each coordinate (2E)-4-hydroxy-3-methylbut-2-enyl diphosphate. Dimethylallyl diphosphate is bound by residues His-41 and His-74. The isopentenyl diphosphate site is built by His-41 and His-74. Cys-96 provides a ligand contact to [4Fe-4S] cluster. His-124 serves as a coordination point for (2E)-4-hydroxy-3-methylbut-2-enyl diphosphate. Position 124 (His-124) interacts with dimethylallyl diphosphate. Position 124 (His-124) interacts with isopentenyl diphosphate. Glu-126 functions as the Proton donor in the catalytic mechanism. Position 167 (Thr-167) interacts with (2E)-4-hydroxy-3-methylbut-2-enyl diphosphate. Cys-197 is a binding site for [4Fe-4S] cluster. 4 residues coordinate (2E)-4-hydroxy-3-methylbut-2-enyl diphosphate: Ser-225, Ser-226, Asn-227, and Ser-269. Ser-225, Ser-226, Asn-227, and Ser-269 together coordinate dimethylallyl diphosphate. Ser-225, Ser-226, Asn-227, and Ser-269 together coordinate isopentenyl diphosphate.

This sequence belongs to the IspH family. It depends on [4Fe-4S] cluster as a cofactor.

The enzyme catalyses isopentenyl diphosphate + 2 oxidized [2Fe-2S]-[ferredoxin] + H2O = (2E)-4-hydroxy-3-methylbut-2-enyl diphosphate + 2 reduced [2Fe-2S]-[ferredoxin] + 2 H(+). The catalysed reaction is dimethylallyl diphosphate + 2 oxidized [2Fe-2S]-[ferredoxin] + H2O = (2E)-4-hydroxy-3-methylbut-2-enyl diphosphate + 2 reduced [2Fe-2S]-[ferredoxin] + 2 H(+). The protein operates within isoprenoid biosynthesis; dimethylallyl diphosphate biosynthesis; dimethylallyl diphosphate from (2E)-4-hydroxy-3-methylbutenyl diphosphate: step 1/1. Its pathway is isoprenoid biosynthesis; isopentenyl diphosphate biosynthesis via DXP pathway; isopentenyl diphosphate from 1-deoxy-D-xylulose 5-phosphate: step 6/6. Its function is as follows. Catalyzes the conversion of 1-hydroxy-2-methyl-2-(E)-butenyl 4-diphosphate (HMBPP) into a mixture of isopentenyl diphosphate (IPP) and dimethylallyl diphosphate (DMAPP). Acts in the terminal step of the DOXP/MEP pathway for isoprenoid precursor biosynthesis. This Haemophilus ducreyi (strain 35000HP / ATCC 700724) protein is 4-hydroxy-3-methylbut-2-enyl diphosphate reductase.